Reading from the N-terminus, the 153-residue chain is Transcriptional repressor NrdR (153 aa).

The segment at Cys3–Cys34 is a zinc-finger region. The ATP-cone domain occupies Ile49 to Thr139.

It belongs to the NrdR family. The cofactor is Zn(2+).

Negatively regulates transcription of bacterial ribonucleotide reductase nrd genes and operons by binding to NrdR-boxes. This Caldicellulosiruptor saccharolyticus (strain ATCC 43494 / DSM 8903 / Tp8T 6331) protein is Transcriptional repressor NrdR.